Consider the following 477-residue polypeptide: Argininosuccinate lyase (477 aa).

It belongs to the lyase 1 family. Argininosuccinate lyase subfamily.

Its subcellular location is the cytoplasm. The enzyme catalyses 2-(N(omega)-L-arginino)succinate = fumarate + L-arginine. The protein operates within amino-acid biosynthesis; L-arginine biosynthesis; L-arginine from L-ornithine and carbamoyl phosphate: step 3/3. The sequence is that of Argininosuccinate lyase from Acinetobacter baumannii (strain ACICU).